A 186-amino-acid polypeptide reads, in one-letter code: Ribosome-recycling factor (186 aa).

It belongs to the RRF family.

It localises to the cytoplasm. In terms of biological role, responsible for the release of ribosomes from messenger RNA at the termination of protein biosynthesis. May increase the efficiency of translation by recycling ribosomes from one round of translation to another. This chain is Ribosome-recycling factor, found in Janthinobacterium sp. (strain Marseille) (Minibacterium massiliensis).